The primary structure comprises 431 residues: Adenylosuccinate synthetase (431 aa).

GTP-binding positions include 13 to 19 (GDEGKGK) and 41 to 43 (GHT). The Proton acceptor role is filled by D14. Residues D14 and G41 each contribute to the Mg(2+) site. Residues 14 to 17 (DEGK), 39 to 42 (NAGH), T130, R144, Q225, T240, and R304 each bind IMP. H42 (proton donor) is an active-site residue. 300–306 (ATTHRPR) contacts substrate. GTP is bound by residues R306, 332-334 (KLD), and 414-416 (STG).

The protein belongs to the adenylosuccinate synthetase family. In terms of assembly, homodimer. Requires Mg(2+) as cofactor.

Its subcellular location is the cytoplasm. The enzyme catalyses IMP + L-aspartate + GTP = N(6)-(1,2-dicarboxyethyl)-AMP + GDP + phosphate + 2 H(+). It functions in the pathway purine metabolism; AMP biosynthesis via de novo pathway; AMP from IMP: step 1/2. Functionally, plays an important role in the de novo pathway of purine nucleotide biosynthesis. Catalyzes the first committed step in the biosynthesis of AMP from IMP. In Nitrosococcus oceani (strain ATCC 19707 / BCRC 17464 / JCM 30415 / NCIMB 11848 / C-107), this protein is Adenylosuccinate synthetase.